The primary structure comprises 1312 residues: DNA repair protein RAD50.L (1312 aa).

Arg-13, Asn-38, Gly-39, Gly-41, Lys-42, Thr-43, Thr-44, Val-67, Asp-69, and Gln-159 together coordinate ATP. Residue Thr-43 coordinates Mg(2+). Gln-159 is a binding site for Mg(2+). Coiled coils occupy residues Val-203–Glu-342, Leu-415–Arg-558, and Ile-587–Lys-628. In terms of domain architecture, Zinc-hook spans Ser-635–Pro-734. The Zn(2+) site is built by Cys-681 and Cys-684. A coiled-coil region spans residues Leu-712–Asn-1070.

This sequence belongs to the SMC family. RAD50 subfamily. In terms of assembly, component of the MRN complex composed of two heterodimers RAD50 and MRE11 associated with a single NBN. Zn(2+) serves as cofactor.

The protein localises to the nucleus. Its subcellular location is the chromosome. It is found in the telomere. The enzyme catalyses ATP + H2O = ADP + phosphate + H(+). Its function is as follows. Component of the MRN complex, which plays a central role in double-strand break (DSB) repair, DNA recombination, maintenance of telomere integrity and meiosis. The MRN complex is involved in the repair of DNA double-strand breaks (DSBs) via homologous recombination (HR), an error-free mechanism which primarily occurs during S and G2 phases. The complex (1) mediates the end resection of damaged DNA, which generates proper single-stranded DNA, a key initial steps in HR, and is (2) required for the recruitment of other repair factors and efficient activation of ATM and ATR upon DNA damage. The MRN complex possesses single-strand endonuclease activity and double-strand-specific 3'-5' exonuclease activity, which are provided by mre11, to initiate end resection, which is required for single-strand invasion and recombination. Within the complex, rad50 is both required to bind DNA ends and hold them in close proximity and regulate the activity of MRE11. Rad50 provides an ATP-dependent control of MRE11 by positioning DNA ends into the mre11 active site: ATP-binding induces a large structural change from an open form with accessible MRE11 nuclease sites into a closed form. The MRN complex is also required for DNA damage signaling via activation of the atm and atr kinases: the nuclease activity of mre11 is not required to activate ATM and ATR. The MRN complex promotes recruitment of topbp1 to DNA damage sites. The MRN complex and rbbp8/CtIP are also required for chromosome alignment during metaphase. The sequence is that of DNA repair protein RAD50.L from Xenopus laevis (African clawed frog).